The chain runs to 390 residues: Succinate--CoA ligase [ADP-forming] subunit beta (390 aa).

One can recognise an ATP-grasp domain in the interval 9 to 244; sequence KSLFQQYGIP…ISQEDVREAK (236 aa). Residues lysine 46, glutamate 99, leucine 102, and glutamate 107 each coordinate ATP. Mg(2+) is bound by residues asparagine 199 and aspartate 213. Residues asparagine 264 and 321–323 contribute to the substrate site; that span reads GIV.

The protein belongs to the succinate/malate CoA ligase beta subunit family. In terms of assembly, heterotetramer of two alpha and two beta subunits. Mg(2+) serves as cofactor.

The catalysed reaction is succinate + ATP + CoA = succinyl-CoA + ADP + phosphate. It carries out the reaction GTP + succinate + CoA = succinyl-CoA + GDP + phosphate. The protein operates within carbohydrate metabolism; tricarboxylic acid cycle; succinate from succinyl-CoA (ligase route): step 1/1. Its function is as follows. Succinyl-CoA synthetase functions in the citric acid cycle (TCA), coupling the hydrolysis of succinyl-CoA to the synthesis of either ATP or GTP and thus represents the only step of substrate-level phosphorylation in the TCA. The beta subunit provides nucleotide specificity of the enzyme and binds the substrate succinate, while the binding sites for coenzyme A and phosphate are found in the alpha subunit. The polypeptide is Succinate--CoA ligase [ADP-forming] subunit beta (Hydrogenovibrio crunogenus (strain DSM 25203 / XCL-2) (Thiomicrospira crunogena)).